The following is a 684-amino-acid chain: Acetyl-coenzyme A synthetase 2 (684 aa).

CoA-binding positions include 207–210 and threonine 326; that span reads RGGK. Residues 402–404, 426–431, aspartate 517, and arginine 532 contribute to the ATP site; these read GEP and DTMWQT. A CoA-binding site is contributed by serine 540. Residue arginine 543 coordinates ATP. Arginine 613 contributes to the CoA binding site.

The protein belongs to the ATP-dependent AMP-binding enzyme family.

It carries out the reaction acetate + ATP + CoA = acetyl-CoA + AMP + diphosphate. The protein is Acetyl-coenzyme A synthetase 2 (ACS2) of Kluyveromyces lactis (strain ATCC 8585 / CBS 2359 / DSM 70799 / NBRC 1267 / NRRL Y-1140 / WM37) (Yeast).